Here is a 168-residue protein sequence, read N- to C-terminus: Ribosome maturation factor RimP (168 aa).

It belongs to the RimP family.

It is found in the cytoplasm. Its function is as follows. Required for maturation of 30S ribosomal subunits. In Syntrophobacter fumaroxidans (strain DSM 10017 / MPOB), this protein is Ribosome maturation factor RimP.